A 656-amino-acid polypeptide reads, in one-letter code: Hemocyanin subunit A (656 aa).

Positions 1 to 18 are cleaved as a signal peptide; it reads MWSLALATLFVLGTVIRA. The Cu cation site is built by histidine 197, histidine 201, and histidine 227. The N-linked (GlcNAc...) asparagine glycan is linked to asparagine 313. The Cu cation site is built by histidine 348, histidine 352, and histidine 388. Cysteine 558 and cysteine 606 are disulfide-bonded.

Belongs to the tyrosinase family. Hemocyanin subfamily. In terms of assembly, 36-chain polymer consisting of 6 hexamers, each of which includes 4 different chains, A, B, C and D. In terms of tissue distribution, hemolymph.

Its subcellular location is the secreted. The protein resides in the extracellular space. Functionally, hemocyanins are copper-containing oxygen carriers occurring freely dissolved in the hemolymph of many mollusks and arthropods. This is Hemocyanin subunit A (HCA) from Scutigera coleoptrata (House centipede).